Here is an 87-residue protein sequence, read N- to C-terminus: uncharacterized protein (87 aa).

This is an uncharacterized protein from Dictyostelium discoideum (Social amoeba).